We begin with the raw amino-acid sequence, 174 residues long: uncharacterized protein (174 aa).

2 stretches are compositionally biased toward basic and acidic residues: residues 1-31 and 52-67; these read MDKHGVKTPLWKKETEELRAEDAEQEEGKEG and EPPRVAEEGEGRERRS. Positions 1 to 69 are disordered; that stretch reads MDKHGVKTPL…GEGRERRSVS (69 aa).

This is an uncharacterized protein from Homo sapiens (Human).